A 339-amino-acid chain; its full sequence is Phenylalanine--tRNA ligase alpha subunit (339 aa).

Glu-250 contributes to the Mg(2+) binding site.

The protein belongs to the class-II aminoacyl-tRNA synthetase family. Phe-tRNA synthetase alpha subunit type 1 subfamily. Tetramer of two alpha and two beta subunits. Mg(2+) is required as a cofactor.

The protein localises to the cytoplasm. The catalysed reaction is tRNA(Phe) + L-phenylalanine + ATP = L-phenylalanyl-tRNA(Phe) + AMP + diphosphate + H(+). The protein is Phenylalanine--tRNA ligase alpha subunit of Flavobacterium psychrophilum (strain ATCC 49511 / DSM 21280 / CIP 103535 / JIP02/86).